We begin with the raw amino-acid sequence, 275 residues long: Collectin-10 (275 aa).

An N-terminal signal peptide occupies residues M1–S25. N-linked (GlcNAc...) asparagine glycosylation occurs at N30. Positions T39–I76 are disordered. The Collagen-like domain maps to G51–K110. Residues T153 to E269 enclose the C-type lectin domain. Disulfide bonds link C174/C268 and C246/C260.

It belongs to the COLEC10/COLEC11 family.

It localises to the secreted. Functionally, lectin that binds to various sugars: galactose &gt; mannose = fucose &gt; N-acetylglucosamine &gt; N-acetylgalactosamine. The sequence is that of Collectin-10 (colec10) from Xenopus tropicalis (Western clawed frog).